The following is a 277-amino-acid chain: Ribosomal protein L11 methyltransferase (277 aa).

Residues Thr-130, Gly-151, Asp-172, and Asn-213 each coordinate S-adenosyl-L-methionine.

It belongs to the methyltransferase superfamily. PrmA family.

The protein resides in the cytoplasm. The catalysed reaction is L-lysyl-[protein] + 3 S-adenosyl-L-methionine = N(6),N(6),N(6)-trimethyl-L-lysyl-[protein] + 3 S-adenosyl-L-homocysteine + 3 H(+). Methylates ribosomal protein L11. This Campylobacter concisus (strain 13826) protein is Ribosomal protein L11 methyltransferase.